A 1106-amino-acid chain; its full sequence is Carbamoyl phosphate synthase large chain (1106 aa).

The tract at residues 1–402 is carboxyphosphate synthetic domain; sequence MPKREDLKSV…ALQKALRSLE (402 aa). ATP contacts are provided by Arg-129, Arg-169, Gly-175, Gly-176, Glu-208, Ile-210, Glu-215, Gly-241, Val-242, His-243, Gln-285, and Glu-299. The region spanning 133 to 328 is the ATP-grasp 1 domain; sequence KGVVERCGAE…IAKIATKLSL (196 aa). Mg(2+) is bound by residues Gln-285, Glu-299, and Asn-301. Residues Gln-285, Glu-299, and Asn-301 each coordinate Mn(2+). An oligomerization domain region spans residues 403–546; the sequence is QKGSQLDFGS…YHYSSYDQED (144 aa). The tract at residues 547-956 is carbamoyl phosphate synthetic domain; the sequence is EIALHEKPSV…AFAKSQAAAN (410 aa). Residues 677-868 form the ATP-grasp 2 domain; the sequence is ARVLDIAGLI…LAKAAALIGT (192 aa). ATP is bound by residues Arg-713, Arg-752, Leu-754, Glu-759, Gly-784, Ile-785, His-786, Ser-787, Gln-827, and Glu-839. Positions 827, 839, and 841 each coordinate Mg(2+). Mn(2+) is bound by residues Gln-827, Glu-839, and Asn-841. The 150-residue stretch at 957-1106 folds into the MGS-like domain; the sequence is NALPTEGKVF…EALLEAAANV (150 aa). The tract at residues 957 to 1106 is allosteric domain; the sequence is NALPTEGKVF…EALLEAAANV (150 aa).

Belongs to the CarB family. Composed of two chains; the small (or glutamine) chain promotes the hydrolysis of glutamine to ammonia, which is used by the large (or ammonia) chain to synthesize carbamoyl phosphate. Tetramer of heterodimers (alpha,beta)4. Mg(2+) is required as a cofactor. Mn(2+) serves as cofactor.

The catalysed reaction is hydrogencarbonate + L-glutamine + 2 ATP + H2O = carbamoyl phosphate + L-glutamate + 2 ADP + phosphate + 2 H(+). It catalyses the reaction hydrogencarbonate + NH4(+) + 2 ATP = carbamoyl phosphate + 2 ADP + phosphate + 2 H(+). Its pathway is amino-acid biosynthesis; L-arginine biosynthesis; carbamoyl phosphate from bicarbonate: step 1/1. It functions in the pathway pyrimidine metabolism; UMP biosynthesis via de novo pathway; (S)-dihydroorotate from bicarbonate: step 1/3. Its function is as follows. Large subunit of the glutamine-dependent carbamoyl phosphate synthetase (CPSase). CPSase catalyzes the formation of carbamoyl phosphate from the ammonia moiety of glutamine, carbonate, and phosphate donated by ATP, constituting the first step of 2 biosynthetic pathways, one leading to arginine and/or urea and the other to pyrimidine nucleotides. The large subunit (synthetase) binds the substrates ammonia (free or transferred from glutamine from the small subunit), hydrogencarbonate and ATP and carries out an ATP-coupled ligase reaction, activating hydrogencarbonate by forming carboxy phosphate which reacts with ammonia to form carbamoyl phosphate. This Renibacterium salmoninarum (strain ATCC 33209 / DSM 20767 / JCM 11484 / NBRC 15589 / NCIMB 2235) protein is Carbamoyl phosphate synthase large chain.